A 471-amino-acid chain; its full sequence is Eukaryotic translation initiation factor 3 subunit L (471 aa).

One can recognise a PCI domain in the interval Asp252–Leu446.

The protein belongs to the eIF-3 subunit L family.

It localises to the cytoplasm. In terms of biological role, component of the eukaryotic translation initiation factor 3 (eIF-3) complex, which is involved in protein synthesis of a specialized repertoire of mRNAs and, together with other initiation factors, stimulates binding of mRNA and methionyl-tRNAi to the 40S ribosome. The eIF-3 complex specifically targets and initiates translation of a subset of mRNAs involved in cell proliferation. This is Eukaryotic translation initiation factor 3 subunit L from Pyricularia oryzae (strain Y34) (Rice blast fungus).